The chain runs to 734 residues: Elongation factor 2 (734 aa).

Residues 18 to 259 (EQIRNIGITA…MVVKYVPNPR (242 aa)) enclose the tr-type G domain. Residues 27–34 (AHVDHGKT), 93–97 (DTPGH), and 147–150 (NKID) contribute to the GTP site. H600 is subject to Diphthamide.

The protein belongs to the TRAFAC class translation factor GTPase superfamily. Classic translation factor GTPase family. EF-G/EF-2 subfamily.

Its subcellular location is the cytoplasm. Its function is as follows. Catalyzes the GTP-dependent ribosomal translocation step during translation elongation. During this step, the ribosome changes from the pre-translocational (PRE) to the post-translocational (POST) state as the newly formed A-site-bound peptidyl-tRNA and P-site-bound deacylated tRNA move to the P and E sites, respectively. Catalyzes the coordinated movement of the two tRNA molecules, the mRNA and conformational changes in the ribosome. In Desulfurococcus mucosus (Desulfurococcus mobilis), this protein is Elongation factor 2 (fusA).